A 154-amino-acid chain; its full sequence is ATP synthase subunit b (154 aa).

A helical membrane pass occupies residues 5–27 (LLGQAIAFTLFVWFCMKYVWPPI).

The protein belongs to the ATPase B chain family. In terms of assembly, F-type ATPases have 2 components, F(1) - the catalytic core - and F(0) - the membrane proton channel. F(1) has five subunits: alpha(3), beta(3), gamma(1), delta(1), epsilon(1). F(0) has three main subunits: a(1), b(2) and c(10-14). The alpha and beta chains form an alternating ring which encloses part of the gamma chain. F(1) is attached to F(0) by a central stalk formed by the gamma and epsilon chains, while a peripheral stalk is formed by the delta and b chains.

Its subcellular location is the cell inner membrane. F(1)F(0) ATP synthase produces ATP from ADP in the presence of a proton or sodium gradient. F-type ATPases consist of two structural domains, F(1) containing the extramembraneous catalytic core and F(0) containing the membrane proton channel, linked together by a central stalk and a peripheral stalk. During catalysis, ATP synthesis in the catalytic domain of F(1) is coupled via a rotary mechanism of the central stalk subunits to proton translocation. Functionally, component of the F(0) channel, it forms part of the peripheral stalk, linking F(1) to F(0). In Aliivibrio fischeri (strain ATCC 700601 / ES114) (Vibrio fischeri), this protein is ATP synthase subunit b.